The chain runs to 480 residues: Dihydrolipoyllysine-residue acetyltransferase component 4 of pyruvate dehydrogenase complex, chloroplastic (480 aa).

A chloroplast-targeting transit peptide spans methionine 1 to serine 53. One can recognise a Lipoyl-binding domain in the interval isoleucine 55 to glutamate 133. Lysine 96 is modified (N6-lipoyllysine). Disordered regions lie at residues lysine 140 to proline 168 and alanine 224 to alanine 245. Residues lysine 142–valine 156 are compositionally biased toward low complexity. In terms of domain architecture, Peripheral subunit-binding (PSBD) spans valine 187–alanine 224. Over residues alanine 234–valine 243 the composition is skewed to pro residues. The active site involves histidine 453.

Belongs to the 2-oxoacid dehydrogenase family. (R)-lipoate is required as a cofactor.

The protein resides in the plastid. Its subcellular location is the chloroplast stroma. It catalyses the reaction N(6)-[(R)-dihydrolipoyl]-L-lysyl-[protein] + acetyl-CoA = N(6)-[(R)-S(8)-acetyldihydrolipoyl]-L-lysyl-[protein] + CoA. Its function is as follows. The pyruvate dehydrogenase complex catalyzes the overall conversion of pyruvate to acetyl-CoA and CO(2). It contains multiple copies of three enzymatic components: pyruvate dehydrogenase (E1), dihydrolipoamide acetyltransferase (E2) and lipoamide dehydrogenase (E3). In Arabidopsis thaliana (Mouse-ear cress), this protein is Dihydrolipoyllysine-residue acetyltransferase component 4 of pyruvate dehydrogenase complex, chloroplastic (LTA2).